We begin with the raw amino-acid sequence, 500 residues long: MSTANQKPTESVSLNAFKQPKAFYLIFSIELWERFGYYGLQGIMAVYLVKQLGMSEADSITLFSSFSALVYGLVAIGGWLGDKVLGTKRVIMLGAIVLAIGYALVAWSGHDAGIVYMGMAAIAVGNGLFKANPSSLLSTCYEKNDPRLDGAFTMYYMSVNIGSFFSMIATPWLAAKYGWSVAFALSVVGLLITIVNFAFCQRWVKQYGSKPDFEPINYRNLLLTIIGVVALIAIATWLLHNQEVARMALGVVAFGIVVIFGKEAFAMKGAARRKMIVAFILMLEAIIFFVLYSQMPTSLNFFAIRNVEHSILGLAVEPEQYQALNPFWIIIGSPILAAIYNKMGDTLPMPTKFAIGMVMCSGAFLILPLGAKFASDAGIVSVSWLVASYGLQSIGELMISGLGLAMVAQLVPQRLMGFIMGSWFLTTAGANLIGGYVAGMMAVPDNVTDPLMSLEVYGRVFLQIGVATAVIAVLMLLTAPKLHRMTQDDAADKAAKAAVA.

The Cytoplasmic portion of the chain corresponds to 1–21 (MSTANQKPTESVSLNAFKQPK). The chain crosses the membrane as a helical span at residues 22 to 44 (AFYLIFSIELWERFGYYGLQGIM). Topologically, residues 45–59 (AVYLVKQLGMSEADS) are periplasmic. The helical transmembrane segment at 60-80 (ITLFSSFSALVYGLVAIGGWL) threads the bilayer. The Cytoplasmic portion of the chain corresponds to 81–89 (GDKVLGTKR). A helical transmembrane segment spans residues 90 to 110 (VIMLGAIVLAIGYALVAWSGH). Position 111 (Asp-111) is a topological domain, periplasmic. Residues 112-132 (AGIVYMGMAAIAVGNGLFKAN) form a helical membrane-spanning segment. Topologically, residues 133–153 (PSSLLSTCYEKNDPRLDGAFT) are cytoplasmic. Residues 154–174 (MYYMSVNIGSFFSMIATPWLA) form a helical membrane-spanning segment. Residues 175–178 (AKYG) are Periplasmic-facing. Residues 179–199 (WSVAFALSVVGLLITIVNFAF) form a helical membrane-spanning segment. Over 200–219 (CQRWVKQYGSKPDFEPINYR) the chain is Cytoplasmic. A helical transmembrane segment spans residues 220 to 240 (NLLLTIIGVVALIAIATWLLH). At 241-246 (NQEVAR) the chain is on the periplasmic side. A helical transmembrane segment spans residues 247-267 (MALGVVAFGIVVIFGKEAFAM). The Cytoplasmic portion of the chain corresponds to 268 to 274 (KGAARRK). A helical membrane pass occupies residues 275–295 (MIVAFILMLEAIIFFVLYSQM). Residues 296-320 (PTSLNFFAIRNVEHSILGLAVEPEQ) lie on the Periplasmic side of the membrane. Residues 321-341 (YQALNPFWIIIGSPILAAIYN) traverse the membrane as a helical segment. The Cytoplasmic segment spans residues 342–352 (KMGDTLPMPTK). The chain crosses the membrane as a helical span at residues 353-373 (FAIGMVMCSGAFLILPLGAKF). At 374-378 (ASDAG) the chain is on the periplasmic side. Residues 379–399 (IVSVSWLVASYGLQSIGELMI) traverse the membrane as a helical segment. Topologically, residues 400-414 (SGLGLAMVAQLVPQR) are cytoplasmic. A helical membrane pass occupies residues 415–435 (LMGFIMGSWFLTTAGANLIGG). Topologically, residues 436-459 (YVAGMMAVPDNVTDPLMSLEVYGR) are periplasmic. The chain crosses the membrane as a helical span at residues 460 to 480 (VFLQIGVATAVIAVLMLLTAP). The Cytoplasmic portion of the chain corresponds to 481–500 (KLHRMTQDDAADKAAKAAVA).

This sequence belongs to the major facilitator superfamily. Proton-dependent oligopeptide transporter (POT/PTR) (TC 2.A.17) family. DtpA subfamily. In terms of assembly, monomer. Has a crown-like structure with a diameter of 8 nm and a central density.

It localises to the cell inner membrane. Functionally, proton-dependent permease that transports di- and tripeptides as well as structurally related peptidomimetics such as aminocephalosporins into the cell. Has a clear preference for dipeptides and tripeptides composed of L-amino acids, and discriminates dipeptides on the basis of the position of charges within the substrate. The sequence is that of Dipeptide and tripeptide permease A (dtpA) from Escherichia coli (strain K12).